Reading from the N-terminus, the 115-residue chain is Large ribosomal subunit protein P2 (115 aa).

The residue at position 1 (methionine 1) is an N-acetylmethionine. Phosphoserine is present on residues serine 17 and serine 19. Position 21 is an N6-acetyllysine; alternate (lysine 21). Residue lysine 21 is modified to N6-succinyllysine; alternate. The span at 69-90 shows a compositional bias: low complexity; that stretch reads GAXAVAAAPGSXAPAAGSAPAA. Positions 69–115 are disordered; the sequence is GAXAVAAAPGSXAPAAGSAPAAAEEKKEEKKEESEESDDDMGFGLFD. Phosphoserine is present on residues serine 79 and serine 86. Over residues 91–101 the composition is skewed to basic and acidic residues; the sequence is AEEKKEEKKEE. Residues serine 102 and serine 105 each carry the phosphoserine modification.

It belongs to the eukaryotic ribosomal protein P1/P2 family. Heterodimer with RPLP1 at the lateral ribosomal stalk of the large ribosomal subunit.

Plays an important role in the elongation step of protein synthesis. The protein is Large ribosomal subunit protein P2 (RPLP2) of Sus scrofa (Pig).